The following is a 223-amino-acid chain: Deoxyribose-phosphate aldolase (223 aa).

The Proton donor/acceptor role is filled by Asp-89. Lys-154 (schiff-base intermediate with acetaldehyde) is an active-site residue. Residue Lys-183 is the Proton donor/acceptor of the active site.

Belongs to the DeoC/FbaB aldolase family. DeoC type 1 subfamily.

The protein resides in the cytoplasm. The catalysed reaction is 2-deoxy-D-ribose 5-phosphate = D-glyceraldehyde 3-phosphate + acetaldehyde. It participates in carbohydrate degradation; 2-deoxy-D-ribose 1-phosphate degradation; D-glyceraldehyde 3-phosphate and acetaldehyde from 2-deoxy-alpha-D-ribose 1-phosphate: step 2/2. In terms of biological role, catalyzes a reversible aldol reaction between acetaldehyde and D-glyceraldehyde 3-phosphate to generate 2-deoxy-D-ribose 5-phosphate. This Thermoanaerobacter sp. (strain X514) protein is Deoxyribose-phosphate aldolase.